Here is a 676-residue protein sequence, read N- to C-terminus: DNA-directed RNA polymerase subunit beta' (676 aa).

Zn(2+) is bound by residues C69, C71, C87, and C90. The Mg(2+) site is built by D485, D487, and D489.

It belongs to the RNA polymerase beta' chain family. RpoC1 subfamily. In plastids the minimal PEP RNA polymerase catalytic core is composed of four subunits: alpha, beta, beta', and beta''. When a (nuclear-encoded) sigma factor is associated with the core the holoenzyme is formed, which can initiate transcription. The cofactor is Mg(2+). Zn(2+) serves as cofactor.

It is found in the plastid. The protein localises to the chloroplast. It carries out the reaction RNA(n) + a ribonucleoside 5'-triphosphate = RNA(n+1) + diphosphate. Functionally, DNA-dependent RNA polymerase catalyzes the transcription of DNA into RNA using the four ribonucleoside triphosphates as substrates. The protein is DNA-directed RNA polymerase subunit beta' of Fagopyrum esculentum subsp. ancestrale (Wild buckwheat).